A 384-amino-acid chain; its full sequence is 5-amino-6-(D-ribitylamino)uracil--L-tyrosine 4-hydroxyphenyl transferase 2 (384 aa).

The Radical SAM core domain occupies 53–286 (VSYVVNRNIY…IAISRIILHT (234 aa)). Positions 67, 71, and 74 each coordinate [4Fe-4S] cluster.

It belongs to the radical SAM superfamily. CofH family. Consists of two subunits, CofG and CofH. [4Fe-4S] cluster is required as a cofactor.

The enzyme catalyses 5-amino-6-(D-ribitylamino)uracil + L-tyrosine + S-adenosyl-L-methionine = 5-amino-5-(4-hydroxybenzyl)-6-(D-ribitylimino)-5,6-dihydrouracil + 2-iminoacetate + 5'-deoxyadenosine + L-methionine + H(+). It participates in cofactor biosynthesis; coenzyme F0 biosynthesis. Catalyzes the radical-mediated synthesis of 5-amino-5-(4-hydroxybenzyl)-6-(D-ribitylimino)-5,6-dihydrouracil from 5-amino-6-(D-ribitylamino)uracil and L-tyrosine. The protein is 5-amino-6-(D-ribitylamino)uracil--L-tyrosine 4-hydroxyphenyl transferase 2 of Methanosarcina acetivorans (strain ATCC 35395 / DSM 2834 / JCM 12185 / C2A).